We begin with the raw amino-acid sequence, 226 residues long: Cytidylate kinase (226 aa).

Position 10 to 18 (10 to 18 (GFSSTGKST)) interacts with ATP.

The protein belongs to the cytidylate kinase family. Type 1 subfamily.

The protein resides in the cytoplasm. The catalysed reaction is CMP + ATP = CDP + ADP. The enzyme catalyses dCMP + ATP = dCDP + ADP. The protein is Cytidylate kinase of Flavobacterium psychrophilum (strain ATCC 49511 / DSM 21280 / CIP 103535 / JIP02/86).